We begin with the raw amino-acid sequence, 334 residues long: DNA-directed RNA polymerase subunit alpha (334 aa).

Positions 1 to 232 (MVREEIAVST…IDLFIPFLHA (232 aa)) are alpha N-terminal domain (alpha-NTD). The segment at 268 to 334 (GIALKCIFID…ILQKHFTIDC (67 aa)) is alpha C-terminal domain (alpha-CTD).

This sequence belongs to the RNA polymerase alpha chain family. As to quaternary structure, in plastids the minimal PEP RNA polymerase catalytic core is composed of four subunits: alpha, beta, beta', and beta''. When a (nuclear-encoded) sigma factor is associated with the core the holoenzyme is formed, which can initiate transcription.

Its subcellular location is the plastid. The protein resides in the chloroplast. It catalyses the reaction RNA(n) + a ribonucleoside 5'-triphosphate = RNA(n+1) + diphosphate. Its function is as follows. DNA-dependent RNA polymerase catalyzes the transcription of DNA into RNA using the four ribonucleoside triphosphates as substrates. The protein is DNA-directed RNA polymerase subunit alpha of Chloranthus spicatus (Chulantree).